We begin with the raw amino-acid sequence, 202 residues long: Glycerol-3-phosphate acyltransferase (202 aa).

A run of 5 helical transmembrane segments spans residues 3 to 23, 51 to 71, 74 to 94, 116 to 136, and 140 to 160; these read ILLATVAAYLIGSVSFAVVVS, KAAILTLVGDAFKGWLAVWLV, FGIGGEIGVALAAIAVFLGHL, AVHPALGLATALTWLIIAFFF, and SLAALVAAVFAPVFDVFLFGT.

Belongs to the PlsY family. In terms of assembly, probably interacts with PlsX.

Its subcellular location is the cell inner membrane. The catalysed reaction is an acyl phosphate + sn-glycerol 3-phosphate = a 1-acyl-sn-glycero-3-phosphate + phosphate. It functions in the pathway lipid metabolism; phospholipid metabolism. In terms of biological role, catalyzes the transfer of an acyl group from acyl-phosphate (acyl-PO(4)) to glycerol-3-phosphate (G3P) to form lysophosphatidic acid (LPA). This enzyme utilizes acyl-phosphate as fatty acyl donor, but not acyl-CoA or acyl-ACP. This Burkholderia thailandensis (strain ATCC 700388 / DSM 13276 / CCUG 48851 / CIP 106301 / E264) protein is Glycerol-3-phosphate acyltransferase.